Reading from the N-terminus, the 314-residue chain is Epithelial cell adhesion molecule (314 aa).

The signal sequence occupies residues 1-23; it reads MAPPQVLAFGLLLAAATATFAAA. The Extracellular segment spans residues 24–265; it reads QEECVCENYK…APEFSMQGLK (242 aa). 6 disulfide bridges follow: Cys27-Cys46, Cys29-Cys59, Cys38-Cys48, Cys66-Cys99, Cys110-Cys116, and Cys118-Cys135. Residues 63–135 enclose the Thyroglobulin type-1 domain; that stretch reads AAKCLVMKAE…RTDKDTEITC (73 aa). Residue Asn74 is glycosylated (N-linked (GlcNAc...) asparagine; partial). Asn111 carries N-linked (GlcNAc...) asparagine glycosylation. A glycan (N-linked (GlcNAc...) asparagine) is linked at Asn198. The chain crosses the membrane as a helical span at residues 266-288; that stretch reads AGVIAVIVVVVIAVVAGIVVLVI. The Cytoplasmic segment spans residues 289–314; the sequence is SRKKRMAKYEKAEIKEMGEMHRELNA.

Belongs to the EPCAM family. Monomer. Interacts with phosphorylated CLDN7. Post-translationally, hyperglycosylated in carcinoma tissue as compared with autologous normal epithelia. Glycosylation at Asn-198 is crucial for protein stability. As to expression, highly and selectively expressed by undifferentiated rather than differentiated embryonic stem cells (ESC). Levels rapidly diminish as soon as ESC's differentiate (at protein levels). Expressed in almost all epithelial cell membranes but not on mesodermal or neural cell membranes. Found on the surface of adenocarcinoma.

Its subcellular location is the lateral cell membrane. It is found in the cell junction. It localises to the tight junction. In terms of biological role, may act as a physical homophilic interaction molecule between intestinal epithelial cells (IECs) and intraepithelial lymphocytes (IELs) at the mucosal epithelium for providing immunological barrier as a first line of defense against mucosal infection. Plays a role in embryonic stem cells proliferation and differentiation. Up-regulates the expression of FABP5, MYC and cyclins A and E. This chain is Epithelial cell adhesion molecule (EPCAM), found in Homo sapiens (Human).